We begin with the raw amino-acid sequence, 174 residues long: Ribosome maturation factor RimM (174 aa).

The region spanning 96 to 169 (KDTFFICDLI…KMVVDLPQGL (74 aa)) is the PRC barrel domain.

The protein belongs to the RimM family. Binds ribosomal protein uS19.

Its subcellular location is the cytoplasm. An accessory protein needed during the final step in the assembly of 30S ribosomal subunit, possibly for assembly of the head region. Essential for efficient processing of 16S rRNA. May be needed both before and after RbfA during the maturation of 16S rRNA. It has affinity for free ribosomal 30S subunits but not for 70S ribosomes. The chain is Ribosome maturation factor RimM from Acetivibrio thermocellus (strain ATCC 27405 / DSM 1237 / JCM 9322 / NBRC 103400 / NCIMB 10682 / NRRL B-4536 / VPI 7372) (Clostridium thermocellum).